The following is a 435-amino-acid chain: Adenylosuccinate synthetase (435 aa).

GTP contacts are provided by residues 13-19 (GDEGKGK) and 41-43 (GHT). Asp14 acts as the Proton acceptor in catalysis. The Mg(2+) site is built by Asp14 and Gly41. IMP is bound by residues 14-17 (DEGK), 39-42 (NAGH), Thr130, Arg144, Gln225, Thr240, and Arg304. Residue His42 is the Proton donor of the active site. 300–306 (ATTGRPR) is a substrate binding site. Residues Arg306, 332–334 (KLD), and 419–421 (STG) contribute to the GTP site.

It belongs to the adenylosuccinate synthetase family. As to quaternary structure, homodimer. It depends on Mg(2+) as a cofactor.

The protein resides in the cytoplasm. The enzyme catalyses IMP + L-aspartate + GTP = N(6)-(1,2-dicarboxyethyl)-AMP + GDP + phosphate + 2 H(+). Its pathway is purine metabolism; AMP biosynthesis via de novo pathway; AMP from IMP: step 1/2. Functionally, plays an important role in the de novo pathway of purine nucleotide biosynthesis. Catalyzes the first committed step in the biosynthesis of AMP from IMP. The protein is Adenylosuccinate synthetase of Nitrosospira multiformis (strain ATCC 25196 / NCIMB 11849 / C 71).